A 409-amino-acid polypeptide reads, in one-letter code: Phosphopentomutase (409 aa).

Asp10, Asp302, His307, Asp343, His344, and His355 together coordinate Mn(2+).

It belongs to the phosphopentomutase family. Mn(2+) serves as cofactor.

It is found in the cytoplasm. It catalyses the reaction 2-deoxy-alpha-D-ribose 1-phosphate = 2-deoxy-D-ribose 5-phosphate. The enzyme catalyses alpha-D-ribose 1-phosphate = D-ribose 5-phosphate. It participates in carbohydrate degradation; 2-deoxy-D-ribose 1-phosphate degradation; D-glyceraldehyde 3-phosphate and acetaldehyde from 2-deoxy-alpha-D-ribose 1-phosphate: step 1/2. Its function is as follows. Isomerase that catalyzes the conversion of deoxy-ribose 1-phosphate (dRib-1-P) and ribose 1-phosphate (Rib-1-P) to deoxy-ribose 5-phosphate (dRib-5-P) and ribose 5-phosphate (Rib-5-P), respectively. The chain is Phosphopentomutase from Chelativorans sp. (strain BNC1).